A 241-amino-acid chain; its full sequence is Carboxy-S-adenosyl-L-methionine synthase (241 aa).

Residues Y38, 63–65, 88–89, 116–117, N131, and R198 each bind S-adenosyl-L-methionine; these read GCS, DN, and DI.

The protein belongs to the class I-like SAM-binding methyltransferase superfamily. Cx-SAM synthase family. Homodimer.

The catalysed reaction is prephenate + S-adenosyl-L-methionine = carboxy-S-adenosyl-L-methionine + 3-phenylpyruvate + H2O. Its function is as follows. Catalyzes the conversion of S-adenosyl-L-methionine (SAM) to carboxy-S-adenosyl-L-methionine (Cx-SAM). The protein is Carboxy-S-adenosyl-L-methionine synthase of Pasteurella multocida (strain Pm70).